Reading from the N-terminus, the 106-residue chain is MTTSLAQQKIRIRLKAFDRRMLDLSCDKIIQTADTTAASAIGPIPLPTKRKIYCVLRSPHVDKDSREHFETRTHRRIIDIYSPSAKTIDALMKLDLPSGVDIEVKL.

This sequence belongs to the universal ribosomal protein uS10 family. As to quaternary structure, part of the 30S ribosomal subunit.

Its function is as follows. Involved in the binding of tRNA to the ribosomes. In Prochlorococcus marinus (strain MIT 9515), this protein is Small ribosomal subunit protein uS10.